The following is a 280-amino-acid chain: Ribulose-phosphate 3-epimerase, chloroplastic (280 aa).

The N-terminal 45 residues, 1 to 45 (SLGSSTLLQSQISGFGGSQKLQKISFSNPNSLTFTRRRIQTVVNA), are a transit peptide targeting the chloroplast. Residue Ser-62 coordinates substrate. A divalent metal cation contacts are provided by His-87, Asp-89, and His-120. The active-site Proton acceptor is Asp-89. Substrate is bound by residues His-120, 198–201 (GFGG), 231–233 (DGG), and 253–254 (GS). Asp-231 is a binding site for a divalent metal cation. Asp-231 acts as the Proton donor in catalysis.

Belongs to the ribulose-phosphate 3-epimerase family. As to quaternary structure, homohexamer. Co(2+) is required as a cofactor. The cofactor is Fe(2+). It depends on Mn(2+) as a cofactor. Requires Zn(2+) as cofactor. In terms of tissue distribution, highest level of expression in leaves, whereas it is low in roots, tubers, and stems.

It is found in the plastid. The protein resides in the chloroplast thylakoid membrane. The catalysed reaction is D-ribulose 5-phosphate = D-xylulose 5-phosphate. Its pathway is carbohydrate biosynthesis; Calvin cycle. Its function is as follows. Catalyzes the reversible epimerization of D-ribulose 5-phosphate to D-xylulose 5-phosphate. This Solanum tuberosum (Potato) protein is Ribulose-phosphate 3-epimerase, chloroplastic.